We begin with the raw amino-acid sequence, 482 residues long: Rho GTPase-activating protein 15 (482 aa).

Phosphoserine is present on residues Ser51, Ser111, Ser205, Ser208, and Ser250. A PH domain is found at Met87–Asp198. The Rho-GAP domain maps to Ser288 to Phe477.

Its subcellular location is the cytoplasm. The protein resides in the membrane. Functionally, GTPase activator for the Rho-type GTPases by converting them to an inactive GDP-bound state. Has activity toward RAC1. Overexpression results in an increase in actin stress fibers and cell contraction. This Rattus norvegicus (Rat) protein is Rho GTPase-activating protein 15 (Arhgap15).